The sequence spans 101 residues: Cyanovirin-N (101 aa).

2 cysteine pairs are disulfide-bonded: Cys8–Cys22 and Cys58–Cys73.

The protein belongs to the cyanovirin-N family. As to quaternary structure, in solution exists as a metastable domain-swapped homodimer which very slowly converts into a more stable monomeric form at room temperature. Under physiological conditions it is unlikely that the dimeric species exists and indeed the monomer is more active against HIV. Interacts with HIV-1 gp120. In terms of processing, cleavage, or reduction and alkylation of the disulfide bonds results in the loss of anti-HIV activity.

Its function is as follows. Mannose-binding lectin. This chain is Cyanovirin-N, found in Nostoc ellipsosporum.